A 94-amino-acid polypeptide reads, in one-letter code: Large ribosomal subunit protein bL27 (94 aa).

Positions 1-9 are excised as a propeptide; that stretch reads MLRLDLQFF.

This sequence belongs to the bacterial ribosomal protein bL27 family. In terms of assembly, part of the 50S ribosomal subunit. The N-terminus is cleaved by ribosomal processing cysteine protease Prp.

Plays a role in sporulation at high temperatures. The polypeptide is Large ribosomal subunit protein bL27 (rpmA) (Bacillus subtilis (strain 168)).